We begin with the raw amino-acid sequence, 182 residues long: Large ribosomal subunit protein uL6 (182 aa).

The protein belongs to the universal ribosomal protein uL6 family. In terms of assembly, part of the 50S ribosomal subunit.

In terms of biological role, this protein binds to the 23S rRNA, and is important in its secondary structure. It is located near the subunit interface in the base of the L7/L12 stalk, and near the tRNA binding site of the peptidyltransferase center. The polypeptide is Large ribosomal subunit protein uL6 (Methanococcus maripaludis (strain C6 / ATCC BAA-1332)).